We begin with the raw amino-acid sequence, 342 residues long: MDEANETAQDSVPRIDGYGFVRPAEFDYAFYEEFIARYHVVLTRRAIKWSKLLQQSAAVEKNMKVKRYIRKGIPNEHRSHVWMVVSGAQAQMDMNTGYFRRMFTEGEKNPKLLDLVITDLNRTFPDNVLFQKNANPSLQKDLYNVLVAYGQHNKTVGYCQGMNFIAGYLILVTKDEEKAFWLMDALIGQILPDYYSPAMTGLKTDQEVLGDLVKKKIPSVAQLIETHGVMWTLLVSRWFICLFIDILPVETVLRIWDCLFFEGSKVIFRVALTLIKQSQASIMEARNFPDICDKFKEITKGEFVTDCHYFMQKIFAEPGSLSKTTIDKLREKQRLKLISEEK.

The Rab-GAP TBC domain maps to 72 to 263; that stretch reads GIPNEHRSHV…RIWDCLFFEG (192 aa).

Its function is as follows. May act as a GTPase-activating protein for Rab family protein(s). This is Growth hormone-regulated TBC protein 1 (grtp1) from Xenopus tropicalis (Western clawed frog).